A 643-amino-acid chain; its full sequence is Cytoplasmic dynein 1 intermediate chain 1 (643 aa).

Basic and acidic residues-rich tracts occupy residues 1–13 and 20–60; these read MSDK…ELER and QIRE…RETE. Disordered stretches follow at residues 1–65 and 96–123; these read MSDK…LLQS and MSPS…RTLQ. Serine 2 carries the post-translational modification N-acetylserine. Residues 2-123 form an interaction with DCTN1 region; that stretch reads SDKSDLKAEL…DLGPLTRTLQ (122 aa). A phosphoserine mark is found at serine 50 and serine 100. Over residues 96–107 the composition is skewed to low complexity; that stretch reads MSPSSKSVSTPS. Position 105 is a phosphothreonine (threonine 105). Residues serine 107 and serine 111 each carry the phosphoserine modification. Residues 145–161 form an interaction with DYNLT1 region; the sequence is KLGVSKVTQVDFLPREV. The segment at 167–219 is disordered; that stretch reads ETQTPLATHQSEEDEEDEEMVEPKVGHDSELENQDKKQETKEAPPRELTEEEK. Threonine 174 carries the phosphothreonine modification. 2 positions are modified to phosphoserine: serine 177 and serine 195. Residues 187 to 219 show a composition bias toward basic and acidic residues; that stretch reads VEPKVGHDSELENQDKKQETKEAPPRELTEEEK. WD repeat units lie at residues 283–332, 336–376, 385–426, 435–475, 480–525, 528–568, and 574–613; these read SKHR…TTPE, HCQS…RTPV, AHTH…TPQE, SKPV…AGIG, GHQG…PLYS, DNAD…EVPT, and EGAY…VPHN. Residue serine 633 is modified to Phosphoserine.

It belongs to the dynein intermediate chain family. Homodimer. The cytoplasmic dynein 1 complex consists of two catalytic heavy chains (HCs) and a number of non-catalytic subunits presented by intermediate chains (ICs), light intermediate chains (LICs) and light chains (LCs); the composition seems to vary in respect to the IC, LIC and LC composition. The heavy chain homodimer serves as a scaffold for the probable homodimeric assembly of the respective non-catalytic subunits. The ICs and LICs bind directly to the HC dimer and the LCs assemble on the IC dimer. Isoform 1, isoform 2 and isoform 3 interact with DYNC1H1. Isoform 1, isoform 2 and isoform 3 interact with DYNLT3. Isoform 1, isoform 2 and isoform 3 interact with DYNLT1. Interacts with DCTN1. Interacts with MCRS1; the interaction is required for the proper distribution of centriolar satellites. In terms of tissue distribution, high levels seen in the brain and testis, while a lower level expression is seen in the liver, spleen, kidney, lung, skeletal muscle and heart.

It localises to the cytoplasm. It is found in the chromosome. The protein localises to the centromere. Its subcellular location is the kinetochore. The protein resides in the cytoskeleton. It localises to the spindle pole. Its function is as follows. Acts as one of several non-catalytic accessory components of the cytoplasmic dynein 1 complex that are thought to be involved in linking dynein to cargos and to adapter proteins that regulate dynein function. Cytoplasmic dynein 1 acts as a motor for the intracellular retrograde motility of vesicles and organelles along microtubules. The intermediate chains mediate the binding of dynein to dynactin via its 150 kDa component (p150-glued) DCTN1. May play a role in mediating the interaction of cytoplasmic dynein with membranous organelles and kinetochores. The chain is Cytoplasmic dynein 1 intermediate chain 1 (Dync1i1) from Rattus norvegicus (Rat).